The chain runs to 233 residues: 2,3,4,5-tetrahydropyridine-2,6-dicarboxylate N-acetyltransferase (233 aa).

It belongs to the transferase hexapeptide repeat family. DapH subfamily.

The catalysed reaction is (S)-2,3,4,5-tetrahydrodipicolinate + acetyl-CoA + H2O = L-2-acetamido-6-oxoheptanedioate + CoA. It participates in amino-acid biosynthesis; L-lysine biosynthesis via DAP pathway; LL-2,6-diaminopimelate from (S)-tetrahydrodipicolinate (acetylase route): step 1/3. Its function is as follows. Catalyzes the transfer of an acetyl group from acetyl-CoA to tetrahydrodipicolinate. This Thermotoga petrophila (strain ATCC BAA-488 / DSM 13995 / JCM 10881 / RKU-1) protein is 2,3,4,5-tetrahydropyridine-2,6-dicarboxylate N-acetyltransferase.